Consider the following 1047-residue polypeptide: Isoleucine--tRNA ligase (1047 aa).

The 'HIGH' region signature appears at 52 to 62 (PTANGMPGAHH). Positions 600 to 604 (KMSKH) match the 'KMSKS' region motif. Lys-603 is a binding site for ATP.

It belongs to the class-I aminoacyl-tRNA synthetase family. IleS type 2 subfamily. In terms of assembly, monomer. Zn(2+) serves as cofactor.

The protein resides in the cytoplasm. The catalysed reaction is tRNA(Ile) + L-isoleucine + ATP = L-isoleucyl-tRNA(Ile) + AMP + diphosphate. Functionally, catalyzes the attachment of isoleucine to tRNA(Ile). As IleRS can inadvertently accommodate and process structurally similar amino acids such as valine, to avoid such errors it has two additional distinct tRNA(Ile)-dependent editing activities. One activity is designated as 'pretransfer' editing and involves the hydrolysis of activated Val-AMP. The other activity is designated 'posttransfer' editing and involves deacylation of mischarged Val-tRNA(Ile). This is Isoleucine--tRNA ligase from Streptomyces coelicolor (strain ATCC BAA-471 / A3(2) / M145).